The sequence spans 250 residues: NAD(P)H-quinone oxidoreductase subunit K, chloroplastic (250 aa).

[4Fe-4S] cluster contacts are provided by C67, C68, C132, and C163.

This sequence belongs to the complex I 20 kDa subunit family. NDH is composed of at least 16 different subunits, 5 of which are encoded in the nucleus. The cofactor is [4Fe-4S] cluster.

Its subcellular location is the plastid. The protein localises to the chloroplast thylakoid membrane. It carries out the reaction a plastoquinone + NADH + (n+1) H(+)(in) = a plastoquinol + NAD(+) + n H(+)(out). The catalysed reaction is a plastoquinone + NADPH + (n+1) H(+)(in) = a plastoquinol + NADP(+) + n H(+)(out). NDH shuttles electrons from NAD(P)H:plastoquinone, via FMN and iron-sulfur (Fe-S) centers, to quinones in the photosynthetic chain and possibly in a chloroplast respiratory chain. The immediate electron acceptor for the enzyme in this species is believed to be plastoquinone. Couples the redox reaction to proton translocation, and thus conserves the redox energy in a proton gradient. This is NAD(P)H-quinone oxidoreductase subunit K, chloroplastic from Adiantum capillus-veneris (Maidenhair fern).